The following is a 97-amino-acid chain: Ferredoxin-like protein YdiT (97 aa).

The protein belongs to the bacterial-type ferredoxin family. FixX subfamily.

Functionally, could be a 3Fe-4S cluster-containing protein. Probably participates in a redox process with YdiQ, YdiR and YdiS. The polypeptide is Ferredoxin-like protein YdiT (ydiT) (Escherichia coli (strain K12)).